The sequence spans 221 residues: Bcl-2-related ovarian killer protein homolog A (221 aa).

A BH4 motif is present at residues 32-44; that stretch reads KVLCRDYIHSRLH. Positions 64–80 match the BH3 motif; that stretch reads VSSVLLWLGDELEYLRP. The short motif at 110-140 is the BH1 element; it reads EIFSTEYSRKGLEKHKGVTWGKIVSLYAVAG. Positions 173 to 187 match the BH2 motif; sequence WLKKRGGWADITKCV. Residues 198–218 traverse the membrane as a helical segment; the sequence is WLVTAACACGHYLKAVVFYLL.

This sequence belongs to the Bcl-2 family. Strongest expression in ovary and eye, weaker expression in gut, kidney and brain. Little expression in liver or heart.

The protein resides in the membrane. May play a role in apoptosis. Does not appear to show pro-apoptotic activity when expressed ectopically in early embryos. The protein is Bcl-2-related ovarian killer protein homolog A of Danio rerio (Zebrafish).